Reading from the N-terminus, the 188-residue chain is Ribosome-recycling factor (188 aa).

The protein belongs to the RRF family.

It is found in the cytoplasm. In terms of biological role, responsible for the release of ribosomes from messenger RNA at the termination of protein biosynthesis. May increase the efficiency of translation by recycling ribosomes from one round of translation to another. In Granulibacter bethesdensis (strain ATCC BAA-1260 / CGDNIH1), this protein is Ribosome-recycling factor.